Consider the following 2098-residue polypeptide: 1-phosphatidylinositol 3-phosphate 5-kinase (2098 aa).

The interval 1–45 (MATDDKTSPTLDSANDLPRSPTSPSHLTHFKPLTPDQDEPPFKSA) is disordered. At alanine 2 the chain carries N-acetylalanine. Phosphoserine; by autocatalysis occurs at positions 23 and 48. The tract at residues 57-123 (KERAEGGQGE…EPTFGGHDPR (67 aa)) is disordered. Over residues 66 to 88 (EQQPLSGSWTSPQLPSRTQSVRS) the composition is skewed to polar residues. Position 88 is a phosphoserine (serine 88). The FYVE-type zinc-finger motif lies at 158–218 (DSQCKECYDC…ACTYCRKIAL (61 aa)). Positions 164, 167, 180, 183, 188, 191, 210, and 213 each coordinate Zn(2+). The tract at residues 292–329 (VQEDAGKSPARNRSASITNLSLDRSGSPMVPSYETSVS) is disordered. Phosphoserine is present on residues serine 299, serine 307, and serine 312. Polar residues predominate over residues 302–315 (RNRSASITNLSLDR). Position 318 is a phosphoserine; by PKB/AKT1 or PKB/AKT2 (serine 318). A Phosphoserine modification is found at serine 329. Residues 365-440 (HSSGMEFQDH…DEYALYRPLQ (76 aa)) enclose the DEP domain. The segment covering 442–459 (TEFSETPSPDSDSVNSVE) has biased composition (polar residues). Positions 442-469 (TEFSETPSPDSDSVNSVEGHSEPSWFKD) are disordered. Positions 460-469 (GHSEPSWFKD) are enriched in basic and acidic residues. Serine 475 carries the phosphoserine modification. The interval 484-505 (GDDNLANSASPSKRTSVSSFQS) is disordered. Positions 488-505 (LANSASPSKRTSVSSFQS) are enriched in polar residues. The chaperonin-like domain stretch occupies residues 616–868 (MMALLQQLLH…MICVAYHSQL (253 aa)). Disordered stretches follow at residues 1161–1191 (RIQPKNSDPFAHSKDASSTSSGQSGSKNEGD) and 1512–1616 (FQQE…STDS). The segment covering 1177 to 1186 (SSTSSGQSGS) has biased composition (low complexity). At serine 1522 the chain carries Phosphoserine; by autocatalysis. Phosphoserine is present on residues serine 1544 and serine 1549. The span at 1562-1578 (LTTLSSQSSTSSTHLQL) shows a compositional bias: low complexity. Phosphoserine; by autocatalysis is present on serine 1669. The interval 1692 to 1799 (QWNSAEEGLP…PQDEVDGGDT (108 aa)) is disordered. Over residues 1704–1714 (STSDSRPKSSS) the composition is skewed to low complexity. Positions 1723–1735 (GGQTNRTTETEPQ) are enriched in polar residues. A Phosphoserine modification is found at serine 1754. The PIPK domain occupies 1758–2084 (SSQKRETLRG…RFCEAMDKYF (327 aa)). The interval 1842-2098 (EEDFIRSLSH…DHWTGLGLNC (257 aa)) is catalytic. Residues serine 1969 and serine 2053 each carry the phosphoserine; by autocatalysis modification.

Component of the PI(3,5)P2 regulatory complex/PAS complex, at least composed of PIKFYVE, FIG4 and VAC14. VAC14 nucleates the assembly of the complex and serves as a scaffold by pentamerizing into a star-shaped structure, which can bind a single copy each of PIKFYVE and FIG4 and coordinates their activities. Interacts (via chaperonin-like domain) with RABEPK; the interaction recruits RABEPK to the endosomal membrane. Interacts with SPAG9. Interacts with EGFR. In terms of processing, autophosphorylates which inhibits its own phosphatidylinositol 3-phosphate 5-kinase activity, stimulates FIG4 lipid phosphatase activity and down-regulates lipid product formation. Dephosphorylated by FIG4 in the PI(3,5)P2 regulatory complex, at Ser-48, Ser-1669 and Ser-2053. Phosphorylated in response to insulin at Ser-318 in a protein kinase B (PKB)-dependent manner.

It localises to the endosome membrane. Its subcellular location is the early endosome membrane. The protein localises to the cytoplasmic vesicle. It is found in the phagosome membrane. The protein resides in the late endosome membrane. It catalyses the reaction a 1,2-diacyl-sn-glycero-3-phospho-(1D-myo-inositol-3-phosphate) + ATP = a 1,2-diacyl-sn-glycero-3-phospho-(1D-myo-inositol-3,5-bisphosphate) + ADP + H(+). The enzyme catalyses a 1,2-diacyl-sn-glycero-3-phospho-(1D-myo-inositol) + ATP = a 1,2-diacyl-sn-glycero-3-phospho-(1D-myo-inositol-5-phosphate) + ADP + H(+). The catalysed reaction is L-seryl-[protein] + ATP = O-phospho-L-seryl-[protein] + ADP + H(+). With respect to regulation, inhibited by apilimod and YM201636. Its function is as follows. Dual specificity kinase implicated in myriad essential cellular processes such as maintenance of endomembrane homeostasis, and endocytic-vacuolar pathway, lysosomal trafficking, nuclear transport, stress- or hormone-induced signaling and cell cycle progression. The PI(3,5)P2 regulatory complex regulates both the synthesis and turnover of phosphatidylinositol 3,5-bisphosphate (PtdIns(3,5)P2). Sole enzyme to catalyze the phosphorylation of phosphatidylinositol 3-phosphate on the fifth hydroxyl of the myo-inositol ring, to form (PtdIns(3,5)P2). Also catalyzes the phosphorylation of phosphatidylinositol on the fifth hydroxyl of the myo-inositol ring, to form phosphatidylinositol 5-phosphate (PtdIns(5)P). Has serine-protein kinase activity and is able to autophosphorylate and transphosphorylate. Autophosphorylation inhibits its own phosphatidylinositol 3-phosphate 5-kinase activity, stimulates FIG4 lipid phosphatase activity and down-regulates lipid product formation. Involved in key endosome operations such as fission and fusion in the course of endosomal cargo transport. Required for the maturation of early into late endosomes, phagosomes and lysosomes. Regulates vacuole maturation and nutrient recovery following engulfment of macromolecules, initiates the redistribution of accumulated lysosomal contents back into the endosome network. Critical regulator of the morphology, degradative activity, and protein turnover of the endolysosomal system in macrophages and platelets. In neutrophils, critical to perform chemotaxis, generate ROS, and undertake phagosome fusion with lysosomes. Plays a key role in the processing and presentation of antigens by major histocompatibility complex class II (MHC class II) mediated by CTSS. Regulates melanosome biogenesis by controlling the delivery of proteins from the endosomal compartment to the melanosome. Essential for systemic glucose homeostasis, mediates insulin-induced signals for endosome/actin remodeling in the course of GLUT4 translocation/glucose uptake activation. Supports microtubule-based endosome-to-trans-Golgi network cargo transport, through association with SPAG9 and RABEPK. Mediates EGFR trafficking to the nucleus. In terms of biological role, (Microbial infection) Required for cell entry of coronaviruses SARS-CoV and SARS-CoV-2, as well as human coronavirus EMC (HCoV-EMC) by endocytosis. In Homo sapiens (Human), this protein is 1-phosphatidylinositol 3-phosphate 5-kinase.